A 638-amino-acid polypeptide reads, in one-letter code: Growth hormone receptor (638 aa).

Residues 1–18 (MDLWQLLLTLALAGSSDA) form the signal peptide. At 19–264 (FSGSEPTAAI…NQFTCEEDFY (246 aa)) the chain is on the extracellular side. Residue Asn-46 is glycosylated (N-linked (GlcNAc...) asparagine). 2 disulfide bridges follow: Cys-56–Cys-66 and Cys-101–Cys-112. An N-linked (GlcNAc...) asparagine glycan is attached at Asn-115. Cys-126 and Cys-140 are disulfide-bonded. The Fibronectin type-III domain occupies 151–254 (PPIALNWTLL…EVLYVTLPQM (104 aa)). Residues Asn-156, Asn-161, and Asn-200 are each glycosylated (N-linked (GlcNAc...) asparagine). The short motif at 240–244 (YGEFS) is the WSXWS motif element. Residues 265-288 (FPWLLIIIFGIFGLTVMLFVFLFS) form a helical membrane-spanning segment. Residues 289–638 (KQQRIKMLIL…STDQLNKIMP (350 aa)) lie on the Cytoplasmic side of the membrane. The required for JAK2 binding stretch occupies residues 294–379 (KMLILPPVPV…HQKSHSNLGV (86 aa)). Residues 297–305 (ILPPVPVPK) carry the Box 1 motif motif. Residues 340-349 (DSWVEFIELD) carry the UbE motif motif. Phosphoserine is present on Ser-341. Residues 353-388 (PDEKNEGSDTDRLLSSDHQKSHSNLGVKDGDSGRTS) are disordered. Over residues 356–372 (KNEGSDTDRLLSSDHQK) the composition is skewed to basic and acidic residues. Phosphotyrosine occurs at positions 487 and 595.

This sequence belongs to the type I cytokine receptor family. Type 1 subfamily. As to quaternary structure, on growth hormone (GH) binding, forms homodimers and binds JAK2 via a box 1-containing domain. In terms of processing, the soluble form (GHBP) is produced by phorbol ester-promoted proteolytic cleavage at the cell surface (shedding) by ADAM17/TACE. Shedding is inhibited by growth hormone (GH) binding to the receptor probably due to a conformational change in GHR rendering the receptor inaccessible to ADAM17. On GH binding, phosphorylated on tyrosine residues in the cytoplasmic domain by JAK2. Post-translationally, ubiquitinated by the ECS(SOCS2) complex following ligand-binding and phosphorylation by JAK2, leading to its degradation by the proteasome. Regulation by the ECS(SOCS2) complex acts as a negative feedback loop of growth hormone receptor signaling. Ubiquitination is not sufficient for GHR internalization.

It localises to the cell membrane. The protein resides in the secreted. Functionally, receptor for pituitary gland growth hormone (GH1) involved in regulating postnatal body growth. On ligand binding, couples to the JAK2/STAT5 pathway. In terms of biological role, the soluble form (GHBP) acts as a reservoir of growth hormone in plasma and may be a modulator/inhibitor of GH signaling. This is Growth hormone receptor (GHR) from Papio anubis (Olive baboon).